The following is a 438-amino-acid chain: Chromosomal replication initiator protein DnaA (438 aa).

Residues 1-74 (MNEINKIWQK…SFYQITGSQV (74 aa)) form a domain I, interacts with DnaA modulators region. Residues 74–100 (VEVKYIITGKEHETGLIEEKKQVIKKG) form a domain II region. Residues 101–317 (NLNPKYTFDT…GSLIKLCAYT (217 aa)) are domain III, AAA+ region. 4 residues coordinate ATP: glycine 145, glycine 147, lysine 148, and threonine 149. Residues 318 to 438 (SLTKVPISMD…DSIIKKVTGQ (121 aa)) are domain IV, binds dsDNA.

Belongs to the DnaA family. Oligomerizes as a right-handed, spiral filament on DNA at oriC.

Its subcellular location is the cytoplasm. In terms of biological role, plays an essential role in the initiation and regulation of chromosomal replication. ATP-DnaA binds to the origin of replication (oriC) to initiate formation of the DNA replication initiation complex once per cell cycle. Binds the DnaA box (a 9 base pair repeat at the origin) and separates the double-stranded (ds)DNA. Forms a right-handed helical filament on oriC DNA; dsDNA binds to the exterior of the filament while single-stranded (ss)DNA is stabiized in the filament's interior. The ATP-DnaA-oriC complex binds and stabilizes one strand of the AT-rich DNA unwinding element (DUE), permitting loading of DNA polymerase. After initiation quickly degrades to an ADP-DnaA complex that is not apt for DNA replication. Binds acidic phospholipids. This Thermodesulfovibrio yellowstonii (strain ATCC 51303 / DSM 11347 / YP87) protein is Chromosomal replication initiator protein DnaA.